A 479-amino-acid polypeptide reads, in one-letter code: Shugoshin (479 aa).

Positions 36–76 (SLRIRSLESEVSNLLSENVSLREQIITLTQELERFEAARTL) form a coiled coil. Disordered regions lie at residues 109 to 145 (SRAV…GFLD), 220 to 247 (EHSL…QADT), and 263 to 479 (AKRK…SMPP). A compositionally biased stretch (basic and acidic residues) spans 123 to 132 (QSRESGPKEV). A compositionally biased stretch (acidic residues) spans 270-286 (EDDESLFESSPSEDDEF). Polar residues-rich tracts occupy residues 290-303 (RPAQ…QNEH) and 318-328 (QSPTLSSQNDH). 2 stretches are compositionally biased toward basic and acidic residues: residues 335–352 (PQSE…RVLE) and 379–388 (GYNEKSEKPL). Over residues 400-411 (KNASPKKSSTRT) the composition is skewed to polar residues.

The protein belongs to the shugoshin family.

Its subcellular location is the nucleus. It localises to the chromosome. The protein resides in the centromere. Its function is as follows. Plays a central role in chromosome cohesion during cell division by preventing premature dissociation of cohesin complex from centromeres after prophase, when most of cohesin complex dissociates from chromosomes arms. The chain is Shugoshin (sgo1) from Emericella nidulans (strain FGSC A4 / ATCC 38163 / CBS 112.46 / NRRL 194 / M139) (Aspergillus nidulans).